The following is a 347-amino-acid chain: tRNA pseudouridine synthase D (347 aa).

Residue D81 is the Nucleophile of the active site. Residues G158 to L304 enclose the TRUD domain.

This sequence belongs to the pseudouridine synthase TruD family.

The catalysed reaction is uridine(13) in tRNA = pseudouridine(13) in tRNA. Functionally, responsible for synthesis of pseudouridine from uracil-13 in transfer RNAs. This is tRNA pseudouridine synthase D from Vibrio vulnificus (strain CMCP6).